The following is a 92-amino-acid chain: Small ribosomal subunit protein uS19c (92 aa).

This sequence belongs to the universal ribosomal protein uS19 family.

The protein localises to the plastid. Its subcellular location is the chloroplast. Protein S19 forms a complex with S13 that binds strongly to the 16S ribosomal RNA. This Daucus carota (Wild carrot) protein is Small ribosomal subunit protein uS19c.